Reading from the N-terminus, the 224-residue chain is MQLTSLPNSQRPREKLIEKGAKALSDAELLAIFLRTGLPGMNVIELAQHLLNENKTLHNLFNASMEEFCAQKGLGTAKYVQLQAVLELSQRYMQERCQRDAIFNSPNAVYDYLTLQMRGLQQEVFMVLYLDSQNRLIKDEILFYGTINSASVYPREVVKAALKNNAAAVIFAHNHPSGIAEPSQADKLITNKLQQALQLVDINVLDHIIVGGETCVSFAERGLI.

The MPN domain maps to 102 to 224; that stretch reads IFNSPNAVYD…CVSFAERGLI (123 aa). Zn(2+) is bound by residues His173, His175, and Asp186. The JAMM motif motif lies at 173–186; it reads HNHPSGIAEPSQAD.

It belongs to the UPF0758 family.

This Pseudoalteromonas translucida (strain TAC 125) protein is UPF0758 protein PSHAa2643.